The chain runs to 559 residues: Formate--tetrahydrofolate ligase (559 aa).

68-75 (TPAGEGKT) lines the ATP pocket.

This sequence belongs to the formate--tetrahydrofolate ligase family. As to quaternary structure, homotetramer.

It catalyses the reaction (6S)-5,6,7,8-tetrahydrofolate + formate + ATP = (6R)-10-formyltetrahydrofolate + ADP + phosphate. It participates in one-carbon metabolism; tetrahydrofolate interconversion. This Moorella thermoacetica (Clostridium thermoaceticum) protein is Formate--tetrahydrofolate ligase.